A 258-amino-acid polypeptide reads, in one-letter code: Undecaprenyl-diphosphatase (258 aa).

Helical transmembrane passes span 1–21 (MSIIDAVILGIVEGLTEFLPV), 42–62 (LKCFEVVIQLGSILAVVFTFF), 71–91 (LWIKLIIGFLPTAAIGYLLYS), 96–116 (LFSQNVVVYMLIIWGVIFIVV), 134–154 (GISYKQAFFIGLSQCFAMVPG), 173–193 (QTAAAFSFLLAVPTMFAATFY), 211–231 (LFLLGGFVAFLVALFAIKMFL), and 237–257 (FDYIPFGIYRILIAFAFMFFV).

Belongs to the UppP family.

The protein localises to the cell inner membrane. It carries out the reaction di-trans,octa-cis-undecaprenyl diphosphate + H2O = di-trans,octa-cis-undecaprenyl phosphate + phosphate + H(+). Its function is as follows. Catalyzes the dephosphorylation of undecaprenyl diphosphate (UPP). Confers resistance to bacitracin. The polypeptide is Undecaprenyl-diphosphatase (Campylobacter hominis (strain ATCC BAA-381 / DSM 21671 / CCUG 45161 / LMG 19568 / NCTC 13146 / CH001A)).